A 177-amino-acid polypeptide reads, in one-letter code: Large ribosomal subunit protein uL6 (177 aa).

Belongs to the universal ribosomal protein uL6 family. In terms of assembly, part of the 50S ribosomal subunit.

Functionally, this protein binds to the 23S rRNA, and is important in its secondary structure. It is located near the subunit interface in the base of the L7/L12 stalk, and near the tRNA binding site of the peptidyltransferase center. The chain is Large ribosomal subunit protein uL6 from Janthinobacterium sp. (strain Marseille) (Minibacterium massiliensis).